The primary structure comprises 322 residues: Short chain dehydrogenase AOL_s00215g274 (322 aa).

Residues 47 to 48 (AV), 104 to 106 (IAV), 197 to 201 (YNVSK), and 230 to 232 (VAT) contribute to the NAD(+) site. Tyr197 (proton acceptor) is an active-site residue.

The protein belongs to the short-chain dehydrogenases/reductases (SDR) family.

It participates in secondary metabolite biosynthesis; terpenoid biosynthesis. Functionally, short chain dehydrogenase; part of the gene cluster that mediates the biosynthesis of sesquiterpenyl epoxy-cyclohexenoids (SECs) such as anthrobotrisins and arthrosporols, metabolites that possess a novel hybrid carbon skeleton consisting of a polyketide-derived epoxycyclohexenol combined with a terpenoid-derived monocyclic sesquiterpenol substructure (PKS-PTS hybrid). The SEC pathway plays an important role for fungal soil colonization via decreasing fungal nematode-capturing ability. Within the pathway, the cytochrome P450 monooxygenase AOL_s00215g274 is involved in specific regional ketone reductions at C-4 of farnesyl epoxy-quinone. The pathway begins with the biosynthesis of 6-methylsalicylic acid (6-MSA), the first precursor of the polyketide-derived epoxycyclohexenol in arthrosporols, by the polyketide synthase (PKS) AOL_s00215g283 via condensation of 1 acetate and 3 malonate units. The 6-methylsalicylic acid decarboxylase AOL_s00215g281 then catalyzes the decarboxylation of 6-methylsalicylic acid to yield m-cresol. The cytochrome P450 monooxygenase AOL_s00215g282 further oxidizes m-cresol to yield toluquinol. With the assistance of the oxidoreductase AOL_s00215g277, the polyprenyl transferase AOL_s00215g276 catalyzes the farnesylation of toluquinol to produce farnesyl hydroquinone, the hybrid precursor for biosynthesis of SECs. Farnesyl hydroquinone undergoes epoxidation and then subsequent dehydrogenation to form farnesyl epoxy-quinone, the first and simplest SEC. The cytochrome P450 monooxygenase AOL_s00215g278 and the FAD-dependent monooxygenase AOL_s00215g279 might be involved in the oxygenation of the phenol moiety, most likely in the epoxy formation. The cytochrome P450 monooxygenases AOL_s00215g274 and AOL_s00215g280 are involved in specific regional ketone reductions at respectively C-4 and C-1 of farnesyl epoxy-quinone PubMed:33823587. The chain is Short chain dehydrogenase AOL_s00215g274 from Arthrobotrys oligospora (strain ATCC 24927 / CBS 115.81 / DSM 1491) (Nematode-trapping fungus).